The following is a 135-amino-acid chain: Interleukin-4 (135 aa).

Residues 1–24 form the signal peptide; the sequence is MGLTYQLIPVLVCLLVCTSHFVHG. 3 disulfides stabilise this stretch: Cys27–Cys135, Cys48–Cys85, and Cys70–Cys105. Asn62 carries an N-linked (GlcNAc...) asparagine glycan.

It belongs to the IL-4/IL-13 family.

It is found in the secreted. In terms of biological role, participates in at least several B-cell activation processes as well as of other cell types. It is a costimulator of DNA-synthesis. It induces the expression of class II MHC molecules on resting B-cells. It enhances both secretion and cell surface expression of IgE and IgG1. It also regulates the expression of the low affinity Fc receptor for IgE (CD23) on both lymphocytes and monocytes. Positively regulates IL31RA expression in macrophages. Stimulates autophagy in dendritic cells by interfering with mTORC1 signaling and through the induction of RUFY4. The chain is Interleukin-4 (IL4) from Bubalus carabanensis (Swamp type water buffalo).